Consider the following 705-residue polypeptide: MSQSSDFILNSTLSSVVERSTPDIAGFCSGYELRRHHHEHLANEGSLRCRTDWEQFIGPIERWGSCNPWEGHFGAVVLPFCKPERLAVICYIFEYAFLYDNVVESAAKSTLNLNTDNIALDETEYRTVRSILGTKQIQSKMLLELLSIDAPRAEVVINSWKEMISTTAKKDKTRAFNNLEEYVDYRIIDTGAPFVDMLMRFGMGIMLTQEEQKRIEPIVKPCYAALGLANDYFSFDIEWEEFQAESDKTTMTNAVWLFMQWENLNAEQAKRRVQEVTKQYEQQYLRNIADFAAGEGKENIKLQTYLKAQGYQVPGNVAWSLRCPRYHPWLCKEAASLLHQDTIQELEAGRKPQALEEYRSRSHSESDLSDASPTFWSGSCRSSARSSVSSAFGPPDKDISITPAILGDEHLLGPAEYISSLPSKGVREAFIDGLNVWLVLPDHRVNQLKSIAQTLHNASLMLDDIEDHSPLRRGRPSTHMIFGTEQTINSANFLLIDVMEKVRQLDDPRCMDIYLEEMRNLFIGQSFDLYWTRNGECPSEEQYLDMIRQKTGGLFRLLTRMMVQIAPVQQKGLETQLASLSDVLGEFFQVRDDYKNLTEEYTGQKGFCEDLDECKFSYPLIHALTSQPKNVQLRGILQQSRSAGGLDVPLKETVLSHLRQAGSIEYTEAKMGELMEKITDSVVSLEGETGSPNWVVRLLIHRLKV.

Residues 9–331 (LNSTLSSVVE…RCPRYHPWLC (323 aa)) form a terpene cyclase region. Position 100 (D100) interacts with Mg(2+). Residues D100, 186–189 (RIID), N230, 234–238 (SFDIE), and 325–326 (RY) each bind substrate. Residues 100–104 (DNVVE) carry the DDXXD 1 motif. Positions 230 to 238 (NDYFSFDIE) match the NSE/DTE motif. Residues 332–705 (KEAASLLHQD…VRLLIHRLKV (374 aa)) are prenyltransferase. The segment covering 349-366 (GRKPQALEEYRSRSHSES) has biased composition (basic and acidic residues). The interval 349-374 (GRKPQALEEYRSRSHSESDLSDASPT) is disordered. Isopentenyl diphosphate-binding residues include K424, R427, and H456. Mg(2+) is bound by residues D463 and D467. The DDXXD 2 motif lies at 463-467 (DDIED). R472 is a dimethylallyl diphosphate binding site. R473 serves as a coordination point for isopentenyl diphosphate. Positions 550, 551, 589, 596, 605, and 615 each coordinate dimethylallyl diphosphate.

In the N-terminal section; belongs to the terpene synthase family. This sequence in the C-terminal section; belongs to the FPP/GGPP synthase family. In terms of assembly, hexamer. Mg(2+) is required as a cofactor.

It carries out the reaction isopentenyl diphosphate + (2E,6E)-farnesyl diphosphate = (2E,6E,10E)-geranylgeranyl diphosphate + diphosphate. The catalysed reaction is isopentenyl diphosphate + (2E,6E,10E)-geranylgeranyl diphosphate = (2E,6E,10E,14E)-geranylfarnesyl diphosphate + diphosphate. It catalyses the reaction (2E,6E,10E)-geranylgeranyl diphosphate = variediene + diphosphate. The enzyme catalyses (2E,6E,10E,14E)-geranylfarnesyl diphosphate = (R,2E)-alpha-cericerene + diphosphate. It participates in secondary metabolite biosynthesis; terpenoid biosynthesis. Its function is as follows. Bifunctional terpene synthase that converts dimethylallyl diphosphate (DMAPP) and isopentenyl diphosphate (IPP) into variediene as a single product. The C-terminal prenyltransferase (PT) domain of EvVS catalyzes formation of geranylgeranyl pyrophosphate (GGPP), whereas the N-terminal terpene cyclase (TC) domain catalyzes the cyclization of GGPP to variediene. The PT domain can also synthesize geranylfarnesyl pyrophosphate (GFPP) from the C5 isoprene units in vitro, while the TC domain is able to cyclize GFPP to the sesterterpene (2E)-alpha-cericerene. The chain is Variediene synthase from Emericella variicolor (Aspergillus stellatus).